The sequence spans 441 residues: Peroxisomal multifunctional enzyme A (441 aa).

The tract at residues 1-302 (MALNFKDKVV…VNSKPADGES (302 aa)) is 3-hydroxyacyl-CoA dehydrogenase. NAD(+) contacts are provided by residues 11–35 (IVTGAGGGIGKVYALEFAKRGAKVV), Ile19, Asp38, 73–74 (SV), and Asn97. Position 149 (Ser149) interacts with substrate. Residue Tyr162 is the Proton acceptor of the active site. NAD(+) is bound by residues 162–166 (YGSMK) and 194–197 (AASR). One can recognise an SCP2 domain in the interval 331–440 (ASKIFTTIQG…KLGALMQGSK (110 aa)). Gln412 is a binding site for substrate.

Belongs to the short-chain dehydrogenases/reductases (SDR) family.

Its subcellular location is the peroxisome. It catalyses the reaction a (3S)-3-hydroxyacyl-CoA + NAD(+) = a 3-oxoacyl-CoA + NADH + H(+). It participates in lipid metabolism; fatty acid beta-oxidation. Enzyme acting on the peroxisomal beta-oxidation pathway for fatty acids. Protects the cells from the increase of the harmful xenobiotic fatty acids incorporated from their diets and optimizes cellular lipid composition for proper development. The chain is Peroxisomal multifunctional enzyme A (mfeA) from Dictyostelium discoideum (Social amoeba).